A 118-amino-acid polypeptide reads, in one-letter code: Phospholipase A2 'basic' (118 aa).

Intrachain disulfides connect C11–C70, C26–C117, C28–C44, C43–C98, C50–C91, C59–C84, and C77–C89. Residues Y27, G29, and G31 each coordinate Ca(2+). H47 is a catalytic residue. D48 is a binding site for Ca(2+). Residues E52–K69 carry the Coagulation factor Xa binding motif motif. The active site involves D92.

It belongs to the phospholipase A2 family. Group I subfamily. D49 sub-subfamily. Requires Ca(2+) as cofactor. In terms of tissue distribution, expressed by the venom gland.

The protein localises to the secreted. It catalyses the reaction a 1,2-diacyl-sn-glycero-3-phosphocholine + H2O = a 1-acyl-sn-glycero-3-phosphocholine + a fatty acid + H(+). Snake venom phospholipase A2 (PLA2) that shows strong anticoagulant activity. Binds directly with the coagulation factor FXa (F10) and blocks the formation of the prothombinase complex. Acts by a nonenzymatic mechanism. Also inhibits the complex composed of tissue factor (F3) and coagulation factor VIIa (F7) (TF-VIIa complex) by both enzymatic and nonenzymatic mechanisms. PLA2 catalyzes the calcium-dependent hydrolysis of the 2-acyl groups in 3-sn-phosphoglycerides. The sequence is that of Phospholipase A2 'basic' from Naja nigricollis (Black-necked spitting cobra).